The following is a 219-amino-acid chain: MQNKLIVKKLGRQDYEPVWKAMHKFTDERTDEDVDQIWLVEHNPVFTQGQAGKAEHVLNAGDIPVIQSDRGGQVTYHGPGQLVAYFLINIRRKKFGVRDLVTHIENLVINTLKAYNIDSTARPDAPGVYVDGKKICSLGLRIRRGCSFHGLALNVDMDLSPFQRINPCGYQGMEMAQVSQLGGPSELENVEQQLIQELVELLGYDQVDIQATSNITAEA.

A BPL/LPL catalytic domain is found at 31-206; sequence DEDVDQIWLV…ELVELLGYDQ (176 aa). Residues 70 to 77, 137 to 139, and 150 to 152 contribute to the substrate site; these read RGGQVTYH, SLG, and GLA. The Acyl-thioester intermediate role is filled by Cys168.

This sequence belongs to the LipB family.

It localises to the cytoplasm. The catalysed reaction is octanoyl-[ACP] + L-lysyl-[protein] = N(6)-octanoyl-L-lysyl-[protein] + holo-[ACP] + H(+). The protein operates within protein modification; protein lipoylation via endogenous pathway; protein N(6)-(lipoyl)lysine from octanoyl-[acyl-carrier-protein]: step 1/2. Functionally, catalyzes the transfer of endogenously produced octanoic acid from octanoyl-acyl-carrier-protein onto the lipoyl domains of lipoate-dependent enzymes. Lipoyl-ACP can also act as a substrate although octanoyl-ACP is likely to be the physiological substrate. The sequence is that of Octanoyltransferase from Vibrio atlanticus (strain LGP32) (Vibrio splendidus (strain Mel32)).